A 569-amino-acid chain; its full sequence is Urease subunit beta (569 aa).

One can recognise a Urease domain in the interval G131 to F569. Ni(2+) is bound by residues H136, H138, and K219. K219 is subject to N6-carboxylysine. H221 provides a ligand contact to substrate. Ni(2+) is bound by residues H248 and H274. H322 acts as the Proton donor in catalysis. D362 provides a ligand contact to Ni(2+).

This sequence belongs to the metallo-dependent hydrolases superfamily. Urease alpha subunit family. In terms of assembly, heterohexamer of 3 UreA (alpha) and 3 UreB (beta) subunits. Four heterohexamers assemble to form a 16 nm dodecameric complex. Ni cation serves as cofactor. Post-translationally, carboxylation allows a single lysine to coordinate two nickel ions.

It is found in the cytoplasm. It carries out the reaction urea + 2 H2O + H(+) = hydrogencarbonate + 2 NH4(+). It functions in the pathway nitrogen metabolism; urea degradation; CO(2) and NH(3) from urea (urease route): step 1/1. Its function is as follows. Ammonia produced by ureolysis increases the gastric pH thereby providing an environment permissive for colonization of the stomach. This Helicobacter pylori (strain J99 / ATCC 700824) (Campylobacter pylori J99) protein is Urease subunit beta.